The sequence spans 480 residues: Chromosomal replication initiator protein DnaA (480 aa).

The tract at residues 1-71 is domain I, interacts with DnaA modulators; that stretch reads MKEFWQTCVS…EALAAEWYQR (71 aa). The domain II stretch occupies residues 71 to 142; the sequence is RPVQVTFELP…DAANIVYERS (72 aa). The domain III, AAA+ region stretch occupies residues 143 to 359; it reads RLNTDLTFEN…GALRKVLAYA (217 aa). ATP-binding residues include Gly187, Gly189, Lys190, and Thr191. The segment at 360 to 480 is domain IV, binds dsDNA; the sequence is RFHGRDVLTV…LHVLEQTLKG (121 aa).

Belongs to the DnaA family. As to quaternary structure, oligomerizes as a right-handed, spiral filament on DNA at oriC.

It is found in the cytoplasm. Functionally, plays an essential role in the initiation and regulation of chromosomal replication. ATP-DnaA binds to the origin of replication (oriC) to initiate formation of the DNA replication initiation complex once per cell cycle. Binds the DnaA box (a 9 base pair repeat at the origin) and separates the double-stranded (ds)DNA. Forms a right-handed helical filament on oriC DNA; dsDNA binds to the exterior of the filament while single-stranded (ss)DNA is stabiized in the filament's interior. The ATP-DnaA-oriC complex binds and stabilizes one strand of the AT-rich DNA unwinding element (DUE), permitting loading of DNA polymerase. After initiation quickly degrades to an ADP-DnaA complex that is not apt for DNA replication. Binds acidic phospholipids. The chain is Chromosomal replication initiator protein DnaA from Bordetella bronchiseptica (strain ATCC BAA-588 / NCTC 13252 / RB50) (Alcaligenes bronchisepticus).